A 545-amino-acid chain; its full sequence is Chaperonin GroEL 2 (545 aa).

ATP is bound by residues 29 to 32, 86 to 90, glycine 413, 479 to 481, and aspartate 495; these read TLGP, DGTTT, and NAA.

Belongs to the chaperonin (HSP60) family. In terms of assembly, forms a cylinder of 14 subunits composed of two heptameric rings stacked back-to-back. Interacts with the co-chaperonin GroES.

The protein localises to the cytoplasm. It carries out the reaction ATP + H2O + a folded polypeptide = ADP + phosphate + an unfolded polypeptide.. In terms of biological role, together with its co-chaperonin GroES, plays an essential role in assisting protein folding. The GroEL-GroES system forms a nano-cage that allows encapsulation of the non-native substrate proteins and provides a physical environment optimized to promote and accelerate protein folding. The chain is Chaperonin GroEL 2 from Prochlorococcus marinus (strain MIT 9301).